The sequence spans 495 residues: MGASVSSDITNTITCNLQEASNTILNNQNLNDHQGIFVNIIKIGDGNINANNFAEKSNASIDINALANALNNSSMNEDLNKKIAQTAKAAIKGVNLMQLGDANTTINDIVNTSIKVKNTAIQNLIIRFDQKIKINIYHIGKGNIKVKNVHLKEIHKIITKEVENAKNNNKDVTKLIEQFSQATESKVEGFSLKILSLIIFSTAFLGLGGVYVGGKIAFPVTLLLSILAFYQYFNWTDRTIFTDGFVDTMFNIDNDGCEALKNLTIENVKSAKGASDRCLKNPKCVAYNWNHNTKKITMFKGVLEEGCKNDILKNNTNETLFERKKLIVREGKKDPIMSTNGDLYLNNKNQTLWYNYKKKKQNNWKELKNEKKIILDNSIKQGIDKFIKIIFGYEEKLPGPMPHTLYIDYSHNNHLKVFLCKLNFLIGKDFKNRDQSKDWTLISTIHLDIKMLDFEENDSCGVIVEQNKLWLLCVAVILLFIGIIGMGLGLKKNKN.

The N-myristoyl glycine; by host moiety is linked to residue Gly2. Asn58, Asn71, Asn72, Asn103, and Asn111 each carry an N-linked (GlcNAc...) asparagine; by host glycan. A coiled-coil region spans residues 150–182 (HLKEIHKIITKEVENAKNNNKDVTKLIEQFSQA). 2 helical membrane passes run 194–214 (ILSLIIFSTAFLGLGGVYVGG) and 216–236 (IAFPVTLLLSILAFYQYFNWT). N-linked (GlcNAc...) asparagine; by host glycans are attached at residues Asn262, Asn314, Asn317, Asn349, and Asn457. Residues 469 to 489 (LWLLCVAVILLFIGIIGMGLG) form a helical membrane-spanning segment.

The protein belongs to the IIV-6 118L/458R family.

It localises to the membrane. The sequence is that of Putative myristoylated membrane protein 458R from Acheta domesticus (House cricket).